Reading from the N-terminus, the 274-residue chain is tRNA-cytidine(32) 2-sulfurtransferase (274 aa).

The PP-loop motif signature appears at 40 to 45 (SGGKDS). C115, C118, and C206 together coordinate [4Fe-4S] cluster.

The protein belongs to the TtcA family. As to quaternary structure, homodimer. It depends on Mg(2+) as a cofactor. The cofactor is [4Fe-4S] cluster.

Its subcellular location is the cytoplasm. The catalysed reaction is cytidine(32) in tRNA + S-sulfanyl-L-cysteinyl-[cysteine desulfurase] + AH2 + ATP = 2-thiocytidine(32) in tRNA + L-cysteinyl-[cysteine desulfurase] + A + AMP + diphosphate + H(+). It participates in tRNA modification. Functionally, catalyzes the ATP-dependent 2-thiolation of cytidine in position 32 of tRNA, to form 2-thiocytidine (s(2)C32). The sulfur atoms are provided by the cysteine/cysteine desulfurase (IscS) system. In Pseudomonas paraeruginosa (strain DSM 24068 / PA7) (Pseudomonas aeruginosa (strain PA7)), this protein is tRNA-cytidine(32) 2-sulfurtransferase.